A 341-amino-acid polypeptide reads, in one-letter code: uncharacterized protein (341 aa).

The stretch at 153 to 179 (AYTLSEKVMNAEREAEETRETIIREAH) forms a coiled coil. Polar residues predominate over residues 319–335 (EQLQNPAPESAPSTSKT). The disordered stretch occupies residues 319–341 (EQLQNPAPESAPSTSKTLRSKNP).

This is an uncharacterized protein from Coxiella burnetii (strain RSA 493 / Nine Mile phase I).